A 226-amino-acid chain; its full sequence is V-type proton ATPase subunit E (226 aa).

Belongs to the V-ATPase E subunit family. In terms of assembly, V-ATPase is a heteromultimeric enzyme composed of a peripheral catalytic V1 complex (components A to H) attached to an integral membrane V0 proton pore complex (components: a, c, c', c'' and d).

Its function is as follows. Subunit of the peripheral V1 complex of vacuolar ATPase essential for assembly or catalytic function. V-ATPase is responsible for acidifying a variety of intracellular compartments in eukaryotic cells. This Mesembryanthemum crystallinum (Common ice plant) protein is V-type proton ATPase subunit E (VATE).